A 115-amino-acid chain; its full sequence is Large ribosomal subunit protein uL22 (115 aa).

This sequence belongs to the universal ribosomal protein uL22 family. Part of the 50S ribosomal subunit.

This protein binds specifically to 23S rRNA; its binding is stimulated by other ribosomal proteins, e.g. L4, L17, and L20. It is important during the early stages of 50S assembly. It makes multiple contacts with different domains of the 23S rRNA in the assembled 50S subunit and ribosome. In terms of biological role, the globular domain of the protein is located near the polypeptide exit tunnel on the outside of the subunit, while an extended beta-hairpin is found that lines the wall of the exit tunnel in the center of the 70S ribosome. The chain is Large ribosomal subunit protein uL22 from Limosilactobacillus fermentum (strain NBRC 3956 / LMG 18251) (Lactobacillus fermentum).